Consider the following 142-residue polypeptide: Large ribosomal subunit protein uL11 (142 aa).

This sequence belongs to the universal ribosomal protein uL11 family. As to quaternary structure, part of the ribosomal stalk of the 50S ribosomal subunit. Interacts with L10 and the large rRNA to form the base of the stalk. L10 forms an elongated spine to which L12 dimers bind in a sequential fashion forming a multimeric L10(L12)X complex. One or more lysine residues are methylated.

Its function is as follows. Forms part of the ribosomal stalk which helps the ribosome interact with GTP-bound translation factors. This Nocardioides sp. (strain ATCC BAA-499 / JS614) protein is Large ribosomal subunit protein uL11.